The following is a 324-amino-acid chain: Aprataxin (324 aa).

An FHA-like domain is found at 23–72; the sequence is SVTLGRGPDTKIKDKKCSREQVELRADCNRGFVTVKQLGVNPTLVDDVVV. The segment at 100–160 is disordered; sequence TEDTSRSKPS…QGLKASMQDP (61 aa). Over residues 111–125 the composition is skewed to polar residues; the sequence is RAQQIQSPTKTTADV. An HIT domain is found at 150–255; it reads SQGLKASMQD…ISQDFDSPCL (106 aa). 2 interaction with DNA substrate regions span residues 175–179 and 237–238; these read DKYPK and SM. The short motif at 240-244 is the Histidine triad motif element; the sequence is HVHLH. Residue His242 is the Tele-AMP-histidine intermediate of the active site. The C2H2-type zinc-finger motif lies at 299–321; sequence LRCHVCGKEQTTIPKLKDHLKTH.

The protein resides in the nucleus. The protein localises to the nucleoplasm. It localises to the nucleolus. The enzyme catalyses a 5'-end adenosine-5'-diphospho-5'-2'-deoxyribonucleoside-DNA + H2O = a 5'-end 5'-phospho-2'-deoxyribonucleoside-DNA + AMP + 2 H(+). It carries out the reaction a 5'-end adenosine-5'-diphospho-5'-ribonucleoside-2'-deoxyribonucleotide-DNA + H2O = a 5'-end 5'-phospho-ribonucleoside-2'-deoxyribonucleotide-DNA + AMP + 2 H(+). The catalysed reaction is a 3'-end 2'-deoxyribonucleotide-3'-diphospho-5'-guanosine-DNA + H2O = a 3'-end 2'-deoxyribonucleotide 3'-phosphate-DNA + GMP + 2 H(+). Its function is as follows. DNA-binding protein involved in single-strand DNA break repair, double-strand DNA break repair and base excision repair. Resolves abortive DNA ligation intermediates formed either at base excision sites, or when DNA ligases attempt to repair non-ligatable breaks induced by reactive oxygen species. Catalyzes the release of adenylate groups covalently linked to 5'-phosphate termini, resulting in the production of 5'-phosphate termini that can be efficiently rejoined. Also able to hydrolyze adenosine 5'-monophosphoramidate (AMP-NH(2)) and diadenosine tetraphosphate (AppppA), but with lower catalytic activity. Likewise, catalyzes the release of 3'-linked guanosine (DNAppG) and inosine (DNAppI) from DNA, but has higher specific activity with 5'-linked adenosine (AppDNA). The sequence is that of Aprataxin (aptx) from Danio rerio (Zebrafish).